The chain runs to 215 residues: Thymidylate kinase (215 aa).

Residue 13-20 participates in ATP binding; the sequence is GLEGAGKS.

This sequence belongs to the thymidylate kinase family.

The catalysed reaction is dTMP + ATP = dTDP + ADP. Phosphorylation of dTMP to form dTDP in both de novo and salvage pathways of dTTP synthesis. This chain is Thymidylate kinase, found in Shewanella frigidimarina (strain NCIMB 400).